The primary structure comprises 843 residues: MFGFLKNLLDDNARDIRRLQKTVDRINSMEPEWQRLSDADLQHKTVEFRQRLENGESLDDLLPEAFATVREASRRVLGMRHFDVQLIGGMVLHQGRIAEMRTGEGKTLVATLPSYLNALTGRGVHVVTVNDYLAKRDAEWMGRIHRFLGLQVGLIIHGLDFAERREAYAADITYGTNNEFGFDYLRDNMVIQPQHMVQRELHYAIVDEVDSILIDEARTPLIISGQANKPTEKYYAVARIIPRLTKDVDYKVDEKAHSVVLTEEGVSRVEKMLGIDNLADSLDWAHHVNQGLKAHALMRRDRDYVVKDGEVIIVDEFTGRLMFGRRYSEGLHQAIEAKEGLEIQNESQTLATITLQNYFRMYDKLSGMTGTAKTEEPEFMQIYKMDVVQIPTNKPMQRKDLPDVVYRTEEGKFNAVVEEIVQSFRRGQPVLVGTVSIEKSEQLSDKLKRRGVPHQVLNAKHHEKEAEIVKNAGQRGMVTIATNMAGRGTDIILGEGVAELGGLYVIGTERHEARRIDNQLRGRSGRQGDPGQTRFYVSLEDDLMRLFGAENIQGVMDRLGMDDSMPIESGMITRAIENAQRRVEARNFDIRKHVLQYDDVMNQQREVIYDQRKKVLNGENLRDTVFDFIDTLVENMVNRFAGEEKYVENWDLPAMLAYAEETFQIAVTAEDLHEMEKEEVIAFFQEKAQERYSQREQELGLETIRELERIILLRVVDSHWMDHLDAMDHLRHGIGLRAYGQKDPLVEYKYEAYSMFQEMIASVQEEFLRYMFRVNVVVAQAEEEKQEAEAEAEAETVLKNAVENRSDDSLPKQPVKAEPRVGRNDPCPCGSGKKYKKCCGVKG.

Residues Q85, 103-107 (GEGKT), and D490 contribute to the ATP site. A disordered region spans residues 799–834 (KNAVENRSDDSLPKQPVKAEPRVGRNDPCPCGSGKK). A compositionally biased stretch (basic and acidic residues) spans 802-823 (VENRSDDSLPKQPVKAEPRVGR). C827, C829, C838, and C839 together coordinate Zn(2+).

It belongs to the SecA family. As to quaternary structure, monomer and homodimer. Part of the essential Sec protein translocation apparatus which comprises SecA, SecYEG and auxiliary proteins SecDF. Other proteins may also be involved. Zn(2+) serves as cofactor.

The protein resides in the cell membrane. It is found in the cytoplasm. The catalysed reaction is ATP + H2O + cellular proteinSide 1 = ADP + phosphate + cellular proteinSide 2.. Its function is as follows. Part of the Sec protein translocase complex. Interacts with the SecYEG preprotein conducting channel. Has a central role in coupling the hydrolysis of ATP to the transfer of proteins into and across the cell membrane, serving as an ATP-driven molecular motor driving the stepwise translocation of polypeptide chains across the membrane. This is Protein translocase subunit SecA from Heliobacterium modesticaldum (strain ATCC 51547 / Ice1).